A 77-amino-acid chain; its full sequence is Acyl carrier protein (77 aa).

One can recognise a Carrier domain in the interval 2–77 (ADVLERVTKI…DAVTYIESHL (76 aa)). An O-(pantetheine 4'-phosphoryl)serine modification is found at Ser-37.

The protein belongs to the acyl carrier protein (ACP) family. 4'-phosphopantetheine is transferred from CoA to a specific serine of apo-ACP by AcpS. This modification is essential for activity because fatty acids are bound in thioester linkage to the sulfhydryl of the prosthetic group.

It is found in the cytoplasm. It functions in the pathway lipid metabolism; fatty acid biosynthesis. In terms of biological role, carrier of the growing fatty acid chain in fatty acid biosynthesis. In Bacillus anthracis (strain A0248), this protein is Acyl carrier protein.